We begin with the raw amino-acid sequence, 534 residues long: Capsid scaffolding protein (534 aa).

Catalysis depends on charge relay system residues His-46, Ser-114, and His-134. The tract at residues 253 to 272 (EDIISIPKSAFLSMLQSSID) is interaction with pAP. Residues 336-342 (RTGKRKR) carry the Nuclear localization signal motif. 2 disordered regions span residues 337 to 356 (TGKRKRGAEDDEGHLFPGEE) and 466 to 524 (GAPP…KIRK). The segment covering 479 to 491 (QSIQQQAPETTHT) has biased composition (polar residues). Residues 514-534 (SRSSPKSKIRKMFCEELLNKQ) are interaction with major capsid protein.

This sequence belongs to the herpesviridae capsid scaffolding protein family. Homomultimer. Interacts with major capsid protein. In terms of assembly, exists in a monomer-dimer equilibrium with the dimer being the active species. Post-translationally, capsid scaffolding protein is cleaved by assemblin after formation of the spherical procapsid. As a result, the capsid obtains its mature, icosahedral shape. Cleavages occur at two or more sites: release (R-site) and maturation (M-site).

Its subcellular location is the host cytoplasm. It is found in the host nucleus. The catalysed reaction is Cleaves -Ala-|-Ser- and -Ala-|-Ala- bonds in the scaffold protein.. Acts as a scaffold protein by binding major capsid protein in the cytoplasm, inducing the nuclear localization of both proteins. Multimerizes in the nucleus such as major capsid protein forms the icosahedral T=16 capsid. Autocatalytic cleavage releases the assembly protein, and subsequently abolishes interaction with major capsid protein. Cleavages products are evicted from the capsid before or during DNA packaging. Functionally, protease that plays an essential role in virion assembly within the nucleus. Catalyzes the cleavage of the assembly protein after formation of the spherical procapsid. By that cleavage, the capsid matures and gains its icosahedral shape. The cleavage sites seem to include -Ala-Ser-, -Ala-Ala-, as well as Ala-Thr bonds. Assemblin and cleavages products are evicted from the capsid before or during DNA packaging. Its function is as follows. Plays a major role in capsid assembly. Acts as a scaffold protein by binding major capsid protein. Multimerizes in the nucleus such as major capsid protein forms the icosahedral T=16 capsid. Cleaved by assemblin after capsid completion. The cleavages products are evicted from the capsid before or during DNA packaging. The polypeptide is Capsid scaffolding protein (ORF17) (Human herpesvirus 8 type P (isolate GK18) (HHV-8)).